The chain runs to 66 residues: Large ribosomal subunit protein bL35 (66 aa).

The segment covering 1 to 16 has biased composition (basic residues); sequence MPKQKTHRASAKRFKR. A disordered region spans residues 1–22; the sequence is MPKQKTHRASAKRFKRTGSGGL.

The protein belongs to the bacterial ribosomal protein bL35 family.

This Streptococcus suis (strain 05ZYH33) protein is Large ribosomal subunit protein bL35.